A 69-amino-acid polypeptide reads, in one-letter code: uncharacterized protein (69 aa).

One can recognise an HTH cro/C1-type domain in the interval 10 to 64; that stretch reads IRAFRKLKGYTQEGFAKALGISVSILGEIERGNRLPSAAIIQDAADVLNISADEL. The H-T-H motif DNA-binding region spans 21–40; the sequence is QEGFAKALGISVSILGEIER.

This is an uncharacterized protein from Bacillus subtilis (strain 168).